The chain runs to 445 residues: Xylose isomerase (445 aa).

Residues His-107 and Asp-110 contribute to the active site. Mg(2+)-binding residues include Glu-238, Glu-274, His-277, Asp-302, Asp-313, Asp-315, and Asp-345.

It belongs to the xylose isomerase family. In terms of assembly, homotetramer. The cofactor is Mg(2+).

The protein localises to the cytoplasm. The catalysed reaction is alpha-D-xylose = alpha-D-xylulofuranose. This is Xylose isomerase (xylA) from Bacillus spizizenii (strain ATCC 23059 / NRRL B-14472 / W23) (Bacillus subtilis subsp. spizizenii).